An 86-amino-acid chain; its full sequence is Putative antitoxin VapB36 (86 aa).

Its function is as follows. Possibly the antitoxin component of a type II toxin-antitoxin (TA) system. Its cognate toxin is VapC36 (Potential). This chain is Putative antitoxin VapB36 (vapB36), found in Mycobacterium tuberculosis (strain CDC 1551 / Oshkosh).